A 645-amino-acid chain; its full sequence is MGVIMAAERIIGIDLGTTNSCVAVMEAGTAKVIENSEGSRTTPSVVAFTENERLVGELAKRQANINAQNTIYASKRIIGRRYDDMRDVKCPYEVFPAKNGDAWIRARGEGYSPVQIGAFVLEKIKETAERYFGAPVKKAVITVPAYFNDAQRQATKDAGTIAGLDVVRIINEPTAAALAYGLDKGDKQRTIVVYDLGGGTFDVSVLEIAEGVFEVKATNGDTKLGGEDFDNAVMEHMMESFKQETGIDLHNDPMAVQRIKEAAEKAKIELSSRLETDITLPFISSDSTGAKHLSLKLTRAKFEGLVSELIERTIEPCKKALDDAGIKDTSKIDEVVLVGGMTRMPKVIQRVKDFFGGKEPCKGVNPDEVVAIGAAIQGGILTGDVRDVLLLDVAPLSLGIETLGGVFTPLIERNTTIPTKKSQVFSTAEDGQTAVTIKVYQGERKMAVDNKLLGQFSLEGIPSAPRGIPQIEVTFDIDANGIVHVSAKDKASGKEQTIKIQSSGGLSEEEIKKMVQDAQDRAEEDEKRKKRVELKNSAEALIHSTEKSLNDYGDKISSADKSGIEAAIKELRECLSNDDSSSDVIQQKYDALMQLSMKLGEAAYSAQKDSGTSTDSTASDTSGNPEERVVDSEYQEIKKDDEDKK.

Residue T200 is modified to Phosphothreonine; by autocatalysis. The disordered stretch occupies residues 603–645; that stretch reads AYSAQKDSGTSTDSTASDTSGNPEERVVDSEYQEIKKDDEDKK. A compositionally biased stretch (low complexity) spans 609–623; sequence DSGTSTDSTASDTSG. The segment covering 625–645 has biased composition (basic and acidic residues); it reads PEERVVDSEYQEIKKDDEDKK.

The protein belongs to the heat shock protein 70 family.

Acts as a chaperone. The sequence is that of Chaperone protein DnaK from Anaplasma marginale (strain St. Maries).